The chain runs to 237 residues: Ribose-5-phosphate isomerase A (237 aa).

Residues 30 to 33, 87 to 90, and 100 to 103 contribute to the substrate site; these read SGST, DGAD, and KGGG. Glu109 acts as the Proton acceptor in catalysis. Lys127 contributes to the substrate binding site.

This sequence belongs to the ribose 5-phosphate isomerase family. In terms of assembly, homodimer.

The enzyme catalyses aldehydo-D-ribose 5-phosphate = D-ribulose 5-phosphate. Its pathway is carbohydrate degradation; pentose phosphate pathway; D-ribose 5-phosphate from D-ribulose 5-phosphate (non-oxidative stage): step 1/1. Functionally, catalyzes the reversible conversion of ribose-5-phosphate to ribulose 5-phosphate. In Prochlorococcus marinus (strain SARG / CCMP1375 / SS120), this protein is Ribose-5-phosphate isomerase A.